We begin with the raw amino-acid sequence, 761 residues long: Complement factor B (761 aa).

The first 22 residues, 1–22 (MESPQLCLVLLVLGFSSGGVSA), serve as a signal peptide directing secretion. Sushi domains are found at residues 32–97 (VSCS…ECRA), 98–157 (IRCP…ICDD), and 160–217 (GYCP…SCQD). Intrachain disulfides connect cysteine 34–cysteine 73, cysteine 59–cysteine 95, cysteine 100–cysteine 142, cysteine 128–cysteine 155, cysteine 162–cysteine 202, and cysteine 188–cysteine 215. 2 N-linked (GlcNAc...) asparagine glycosylation sites follow: asparagine 119 and asparagine 139. In terms of domain architecture, VWFA spans 267-466 (NIYLVLDGSD…DLENVFYQMI (200 aa)). 2 residues coordinate Mg(2+): serine 275 and serine 277. Asparagine 282 carries N-linked (GlcNAc...) asparagine glycosylation. Mg(2+) is bound at residue threonine 350. N-linked (GlcNAc...) asparagine glycosylation is present at asparagine 375. Residues 474-754 (LCGMVWEHKK…VLPWLKDKLK (281 aa)) enclose the Peptidase S1 domain. Cystine bridges form between cysteine 475–cysteine 593, cysteine 508–cysteine 524, cysteine 596–cysteine 612, cysteine 653–cysteine 679, and cysteine 692–cysteine 722. Residues histidine 523 and aspartate 573 each act as charge relay system in the active site. Residue serine 696 is the Charge relay system of the active site.

It belongs to the peptidase S1 family. In terms of assembly, monomer. Interacts with complement C3b; this interaction is dependent on the presence of Mg(2+). As to quaternary structure, catalytic component of the C3 convertase of the alternative complement pathway, also named C3bBb, composed of complement factor B Bb and complement C3b. Catalytic component of the C5 convertase of the alternative complement pathway, also named C3bBb3b, composed of complement factor B Bb and additional molecules of complement C3b. Interacts to CFP; this interaction contributes to the stabilization of the active C3-convertase enzyme complex. The cofactor is Mg(2+). Requires Mn(2+) as cofactor. In terms of processing, cleaved by CFD following activation of the alternative complement system, generating Ba and Bb chains. Cleavage and activation takes place when CFB is already associated with complement C3b.

The protein resides in the secreted. It localises to the cell surface. It catalyses the reaction Cleavage of Arg-|-Ser bond in complement component C3 alpha-chain to yield C3a and C3b, and Arg-|-Xaa bond in complement component C5 alpha-chain to yield C5a and C5b.. In terms of biological role, precursor of the catalytic component of the C3 and C5 convertase complexes of the alternative pathway of the complement system, a cascade of proteins that leads to phagocytosis and breakdown of pathogens and signaling that strengthens the adaptive immune system. The alternative complement pathway acts as an amplification loop that enhances other complement pathways (classical, lectin and GZMK) by promoting formation of additional C3 and C5 convertases. CFB is cleaved and activated by CFD to generate Ba and Bb chains; Bb chain constituting the catalytic component of the C3 and C5 convertases. Its function is as follows. Serine protease component of the complement C3 and C5 convertase complexes of the alternative complement pathway. Following cleavage and activation by factor D (CFD), forms the C3 convertase together with complement C3b. As part of the C3 convertase, cleaves and activates C3 into C3a anaphylatoxin and C3b opsonin, the next components of the complement pathways. When an additional complement C3b molecule binds to the C3 convertase, forms the C5 convertase, which cleaves and activates C5 into C5a anaphylatoxin and C5b component of the membrane attack complex. Involved in proliferation and differentiation of preactivated B-lymphocytes, rapid spreading of peripheral blood monocytes, stimulation of lymphocyte blastogenesis and lysis of erythrocytes. In Mus musculus (Mouse), this protein is Complement factor B (Cfb).